Consider the following 478-residue polypeptide: Putative malate transporter YflS (478 aa).

The next 12 membrane-spanning stretches (helical) occupy residues 12–31, 41–57, 64–81, 96–118, 187–209, 222–244, 277–296, 300–319, 332–354, 364–386, 398–420, and 450–472; these read AVKL…IWFI, AWHL…GFIS, AIAI…TLSI, IVIA…ISYV, GFQG…PLIA, WTSW…PLVI, LSMV…GGSF, ATTT…VLTW, LTWF…VSWF, GFSW…YFFA, AFLA…LAFI, and WSIG…GLWW.

Belongs to the SLC13A/DASS transporter (TC 2.A.47) family. DIT1 subfamily.

The protein resides in the cell membrane. Its function is as follows. Might be a malate transporter. The chain is Putative malate transporter YflS (yflS) from Bacillus subtilis (strain 168).